A 66-amino-acid chain; its full sequence is Large ribosomal subunit protein bL35 (66 aa).

Basic residues-rich tracts occupy residues 1-15 and 27-40; these read MPKL…KRFK and AGKR…TKKQ. The tract at residues 1-40 is disordered; sequence MPKLKTKSGAKKRFKVTGTGKVMSAHAGKRHGMIKRTKKQ.

The protein belongs to the bacterial ribosomal protein bL35 family.

The sequence is that of Large ribosomal subunit protein bL35 from Rhodopseudomonas palustris (strain BisA53).